A 212-amino-acid polypeptide reads, in one-letter code: Protein RER1C (212 aa).

N-acetylmethionine is present on M1. 4 consecutive transmembrane segments (helical) span residues 55–75 (TVPH…IYIV), 82–102 (GFYI…IAFL), 135–155 (EFKF…MTFF), and 157–177 (VFDV…LFFL).

Belongs to the RER1 family.

The protein localises to the membrane. Functionally, involved in the retrieval of endoplasmic reticulum membrane proteins from the early Golgi compartment. In Arabidopsis thaliana (Mouse-ear cress), this protein is Protein RER1C (RER1C).